The primary structure comprises 70 residues: Large ribosomal subunit protein eL38 (70 aa).

A Glycyl lysine isopeptide (Lys-Gly) (interchain with G-Cter in SUMO2) cross-link involves residue Lys4. Lys9 carries the post-translational modification N6-acetyllysine; alternate. Lys9 is covalently cross-linked (Glycyl lysine isopeptide (Lys-Gly) (interchain with G-Cter in SUMO2); alternate). N6-acetyllysine is present on Lys67.

The protein belongs to the eukaryotic ribosomal protein eL38 family. Component of the large ribosomal subunit.

It localises to the cytoplasm. In terms of biological role, component of the large ribosomal subunit. The ribosome is a large ribonucleoprotein complex responsible for the synthesis of proteins in the cell. The protein is Large ribosomal subunit protein eL38 (RPL38) of Homo sapiens (Human).